Here is a 307-residue protein sequence, read N- to C-terminus: Elongation factor Ts (307 aa).

An involved in Mg(2+) ion dislocation from EF-Tu region spans residues 80–83; the sequence is TDFV.

It belongs to the EF-Ts family.

It localises to the cytoplasm. Associates with the EF-Tu.GDP complex and induces the exchange of GDP to GTP. It remains bound to the aminoacyl-tRNA.EF-Tu.GTP complex up to the GTP hydrolysis stage on the ribosome. The polypeptide is Elongation factor Ts (Clostridium botulinum (strain Loch Maree / Type A3)).